Here is a 366-residue protein sequence, read N- to C-terminus: Protein RecA (366 aa).

ATP is bound at residue 81 to 88; that stretch reads GPESSGKT.

The protein belongs to the RecA family.

The protein resides in the cytoplasm. In terms of biological role, can catalyze the hydrolysis of ATP in the presence of single-stranded DNA, the ATP-dependent uptake of single-stranded DNA by duplex DNA, and the ATP-dependent hybridization of homologous single-stranded DNAs. It interacts with LexA causing its activation and leading to its autocatalytic cleavage. In Leptospira interrogans serogroup Icterohaemorrhagiae serovar copenhageni (strain Fiocruz L1-130), this protein is Protein RecA.